The sequence spans 343 residues: Uroporphyrinogen decarboxylase (343 aa).

Residues 23–27 (RQAGR), aspartate 73, tyrosine 150, serine 205, and histidine 322 contribute to the substrate site.

The protein belongs to the uroporphyrinogen decarboxylase family. In terms of assembly, homodimer.

It is found in the cytoplasm. The catalysed reaction is uroporphyrinogen III + 4 H(+) = coproporphyrinogen III + 4 CO2. It participates in porphyrin-containing compound metabolism; protoporphyrin-IX biosynthesis; coproporphyrinogen-III from 5-aminolevulinate: step 4/4. Functionally, catalyzes the decarboxylation of four acetate groups of uroporphyrinogen-III to yield coproporphyrinogen-III. This Cereibacter sphaeroides (strain ATCC 17025 / ATH 2.4.3) (Rhodobacter sphaeroides) protein is Uroporphyrinogen decarboxylase.